Consider the following 101-residue polypeptide: Large ribosomal subunit protein bL21 (101 aa).

It belongs to the bacterial ribosomal protein bL21 family. Part of the 50S ribosomal subunit. Contacts protein L20.

Its function is as follows. This protein binds to 23S rRNA in the presence of protein L20. The chain is Large ribosomal subunit protein bL21 from Metamycoplasma arthritidis (strain 158L3-1) (Mycoplasma arthritidis).